We begin with the raw amino-acid sequence, 159 residues long: MDLEIFDQTTAQLPNEQLEMVRDLLQYAAKELSLSENTEMSLTFVNNPEIKKLNAQYRNVDRATDVLSFAAEEAGDETPIIMDPEMAAEIPVNLGDLFISIDKVAEQAKFLGHSVDRELGFLAVHGFLHLNGYDHEEPADEEKMFKLQREILDGYGLTR.

Zn(2+) contacts are provided by His-125, His-129, and His-135.

This sequence belongs to the endoribonuclease YbeY family. Zn(2+) is required as a cofactor.

It localises to the cytoplasm. Its function is as follows. Single strand-specific metallo-endoribonuclease involved in late-stage 70S ribosome quality control and in maturation of the 3' terminus of the 16S rRNA. The sequence is that of Endoribonuclease YbeY from Limosilactobacillus reuteri (strain DSM 20016) (Lactobacillus reuteri).